The following is a 158-amino-acid chain: 2-C-methyl-D-erythritol 2,4-cyclodiphosphate synthase (158 aa).

A divalent metal cation contacts are provided by D9 and H11. Residues 9 to 11 (DVH) and 35 to 36 (HS) contribute to the 4-CDP-2-C-methyl-D-erythritol 2-phosphate site. Position 43 (H43) interacts with a divalent metal cation. 4-CDP-2-C-methyl-D-erythritol 2-phosphate-binding positions include 57 to 59 (DIG), 62 to 66 (FPDTD), 133 to 136 (TTTE), F140, and R143.

Belongs to the IspF family. Homotrimer. A divalent metal cation is required as a cofactor.

It catalyses the reaction 4-CDP-2-C-methyl-D-erythritol 2-phosphate = 2-C-methyl-D-erythritol 2,4-cyclic diphosphate + CMP. The protein operates within isoprenoid biosynthesis; isopentenyl diphosphate biosynthesis via DXP pathway; isopentenyl diphosphate from 1-deoxy-D-xylulose 5-phosphate: step 4/6. In terms of biological role, involved in the biosynthesis of isopentenyl diphosphate (IPP) and dimethylallyl diphosphate (DMAPP), two major building blocks of isoprenoid compounds. Catalyzes the conversion of 4-diphosphocytidyl-2-C-methyl-D-erythritol 2-phosphate (CDP-ME2P) to 2-C-methyl-D-erythritol 2,4-cyclodiphosphate (ME-CPP) with a corresponding release of cytidine 5-monophosphate (CMP). This Actinobacillus pleuropneumoniae serotype 7 (strain AP76) protein is 2-C-methyl-D-erythritol 2,4-cyclodiphosphate synthase.